A 946-amino-acid chain; its full sequence is Bifunctional glutamine synthetase adenylyltransferase/adenylyl-removing enzyme (946 aa).

An adenylyl removase region spans residues 1–440 (MKPLSSPLQQ…VFNELIGDDE (440 aa)). The tract at residues 449-946 (SEQWRELWQD…ASWQKWLVEE (498 aa)) is adenylyl transferase.

The protein belongs to the GlnE family. Mg(2+) is required as a cofactor.

The enzyme catalyses [glutamine synthetase]-O(4)-(5'-adenylyl)-L-tyrosine + phosphate = [glutamine synthetase]-L-tyrosine + ADP. It carries out the reaction [glutamine synthetase]-L-tyrosine + ATP = [glutamine synthetase]-O(4)-(5'-adenylyl)-L-tyrosine + diphosphate. Functionally, involved in the regulation of glutamine synthetase GlnA, a key enzyme in the process to assimilate ammonia. When cellular nitrogen levels are high, the C-terminal adenylyl transferase (AT) inactivates GlnA by covalent transfer of an adenylyl group from ATP to specific tyrosine residue of GlnA, thus reducing its activity. Conversely, when nitrogen levels are low, the N-terminal adenylyl removase (AR) activates GlnA by removing the adenylyl group by phosphorolysis, increasing its activity. The regulatory region of GlnE binds the signal transduction protein PII (GlnB) which indicates the nitrogen status of the cell. This is Bifunctional glutamine synthetase adenylyltransferase/adenylyl-removing enzyme from Escherichia coli (strain SE11).